A 349-amino-acid chain; its full sequence is tRNA N6-adenosine threonylcarbamoyltransferase (349 aa).

Fe cation contacts are provided by His-117, His-121, and Tyr-138. Substrate contacts are provided by residues 138–142 (YVAGG), Asp-170, Asp-191, and Asn-271. Asp-299 contacts Fe cation.

It belongs to the KAE1 / TsaD family. It depends on Fe(2+) as a cofactor.

It localises to the cytoplasm. It carries out the reaction L-threonylcarbamoyladenylate + adenosine(37) in tRNA = N(6)-L-threonylcarbamoyladenosine(37) in tRNA + AMP + H(+). Functionally, required for the formation of a threonylcarbamoyl group on adenosine at position 37 (t(6)A37) in tRNAs that read codons beginning with adenine. Is probably involved in the transfer of the threonylcarbamoyl moiety of threonylcarbamoyl-AMP (TC-AMP) to the N6 group of A37. The protein is tRNA N6-adenosine threonylcarbamoyltransferase of Aeropyrum pernix (strain ATCC 700893 / DSM 11879 / JCM 9820 / NBRC 100138 / K1).